The sequence spans 212 residues: Imidazole glycerol phosphate synthase subunit HisH (212 aa).

The 211-residue stretch at 2 to 212 (KVAVIDYGMG…KNFLAWDGNV (211 aa)) folds into the Glutamine amidotransferase type-1 domain. The Nucleophile role is filled by C82. Active-site residues include H190 and E192.

As to quaternary structure, heterodimer of HisH and HisF.

It is found in the cytoplasm. The catalysed reaction is 5-[(5-phospho-1-deoxy-D-ribulos-1-ylimino)methylamino]-1-(5-phospho-beta-D-ribosyl)imidazole-4-carboxamide + L-glutamine = D-erythro-1-(imidazol-4-yl)glycerol 3-phosphate + 5-amino-1-(5-phospho-beta-D-ribosyl)imidazole-4-carboxamide + L-glutamate + H(+). The enzyme catalyses L-glutamine + H2O = L-glutamate + NH4(+). It functions in the pathway amino-acid biosynthesis; L-histidine biosynthesis; L-histidine from 5-phospho-alpha-D-ribose 1-diphosphate: step 5/9. In terms of biological role, IGPS catalyzes the conversion of PRFAR and glutamine to IGP, AICAR and glutamate. The HisH subunit catalyzes the hydrolysis of glutamine to glutamate and ammonia as part of the synthesis of IGP and AICAR. The resulting ammonia molecule is channeled to the active site of HisF. This Chromobacterium violaceum (strain ATCC 12472 / DSM 30191 / JCM 1249 / CCUG 213 / NBRC 12614 / NCIMB 9131 / NCTC 9757 / MK) protein is Imidazole glycerol phosphate synthase subunit HisH.